The following is a 208-amino-acid chain: 3-demethoxyubiquinol 3-hydroxylase (208 aa).

Glu-57, Glu-87, His-90, Glu-139, Glu-171, and His-174 together coordinate Fe cation.

The protein belongs to the COQ7 family. Requires Fe cation as cofactor.

It is found in the cell membrane. It catalyses the reaction a 5-methoxy-2-methyl-3-(all-trans-polyprenyl)benzene-1,4-diol + AH2 + O2 = a 3-demethylubiquinol + A + H2O. It participates in cofactor biosynthesis; ubiquinone biosynthesis. In terms of biological role, catalyzes the hydroxylation of 2-nonaprenyl-3-methyl-6-methoxy-1,4-benzoquinol during ubiquinone biosynthesis. The polypeptide is 3-demethoxyubiquinol 3-hydroxylase (Nitrosospira multiformis (strain ATCC 25196 / NCIMB 11849 / C 71)).